Consider the following 607-residue polypeptide: Aspartate--tRNA(Asp/Asn) ligase (607 aa).

Glu-168 lines the L-aspartate pocket. The aspartate stretch occupies residues Gln-192–Lys-195. Position 214 (Arg-214) interacts with L-aspartate. ATP-binding positions include Arg-214–Glu-216 and Gln-223. His-449 is an L-aspartate binding site. ATP is bound at residue Glu-483. Arg-490 lines the L-aspartate pocket. Residue Gly-535–Arg-538 coordinates ATP. The tract at residues Leu-578–Thr-607 is disordered. The segment covering Ala-580–Ala-590 has biased composition (basic and acidic residues). Residues Arg-591 to Thr-607 are compositionally biased toward low complexity.

The protein belongs to the class-II aminoacyl-tRNA synthetase family. Type 1 subfamily. Homodimer.

It localises to the cytoplasm. It catalyses the reaction tRNA(Asx) + L-aspartate + ATP = L-aspartyl-tRNA(Asx) + AMP + diphosphate. Functionally, aspartyl-tRNA synthetase with relaxed tRNA specificity since it is able to aspartylate not only its cognate tRNA(Asp) but also tRNA(Asn). Reaction proceeds in two steps: L-aspartate is first activated by ATP to form Asp-AMP and then transferred to the acceptor end of tRNA(Asp/Asn). The protein is Aspartate--tRNA(Asp/Asn) ligase of Salinispora tropica (strain ATCC BAA-916 / DSM 44818 / JCM 13857 / NBRC 105044 / CNB-440).